A 158-amino-acid polypeptide reads, in one-letter code: Ribosome maturation factor RimP (158 aa).

This sequence belongs to the RimP family.

The protein resides in the cytoplasm. Functionally, required for maturation of 30S ribosomal subunits. This is Ribosome maturation factor RimP from Lactobacillus acidophilus (strain ATCC 700396 / NCK56 / N2 / NCFM).